The primary structure comprises 220 residues: N-(5'-phosphoribosyl)anthranilate isomerase (220 aa).

The protein belongs to the TrpF family.

The enzyme catalyses N-(5-phospho-beta-D-ribosyl)anthranilate = 1-(2-carboxyphenylamino)-1-deoxy-D-ribulose 5-phosphate. The protein operates within amino-acid biosynthesis; L-tryptophan biosynthesis; L-tryptophan from chorismate: step 3/5. The protein is N-(5'-phosphoribosyl)anthranilate isomerase of Xylella fastidiosa (strain 9a5c).